The sequence spans 293 residues: 4-hydroxy-tetrahydrodipicolinate synthase (293 aa).

T44 provides a ligand contact to pyruvate. Y132 acts as the Proton donor/acceptor in catalysis. Catalysis depends on K162, which acts as the Schiff-base intermediate with substrate. I204 is a binding site for pyruvate.

Belongs to the DapA family. In terms of assembly, homotetramer; dimer of dimers.

It is found in the cytoplasm. It carries out the reaction L-aspartate 4-semialdehyde + pyruvate = (2S,4S)-4-hydroxy-2,3,4,5-tetrahydrodipicolinate + H2O + H(+). The protein operates within amino-acid biosynthesis; L-lysine biosynthesis via DAP pathway; (S)-tetrahydrodipicolinate from L-aspartate: step 3/4. Its function is as follows. Catalyzes the condensation of (S)-aspartate-beta-semialdehyde [(S)-ASA] and pyruvate to 4-hydroxy-tetrahydrodipicolinate (HTPA). This is 4-hydroxy-tetrahydrodipicolinate synthase from Erythrobacter litoralis (strain HTCC2594).